We begin with the raw amino-acid sequence, 318 residues long: NADH-ubiquinone oxidoreductase chain 1 (318 aa).

The next 8 helical transmembrane spans lie at 2–22 (PMIN…FLML), 76–96 (ALAL…IPLI), 100–120 (LGLL…LWSG), 146–166 (LALI…SALI), 171–191 (HSWL…STLA), 222–242 (LFFM…TMIF), 253–273 (ELYT…FLWI), and 294–314 (LPLT…TSGI).

It belongs to the complex I subunit 1 family. As to quaternary structure, core subunit of respiratory chain NADH dehydrogenase (Complex I) which is composed of 45 different subunits.

Its subcellular location is the mitochondrion inner membrane. It catalyses the reaction a ubiquinone + NADH + 5 H(+)(in) = a ubiquinol + NAD(+) + 4 H(+)(out). In terms of biological role, core subunit of the mitochondrial membrane respiratory chain NADH dehydrogenase (Complex I) which catalyzes electron transfer from NADH through the respiratory chain, using ubiquinone as an electron acceptor. Essential for the catalytic activity and assembly of complex I. This is NADH-ubiquinone oxidoreductase chain 1 (MT-ND1) from Pongo abelii (Sumatran orangutan).